The sequence spans 195 residues: Large ribosomal subunit protein bL25 (195 aa).

The protein belongs to the bacterial ribosomal protein bL25 family. CTC subfamily. As to quaternary structure, part of the 50S ribosomal subunit; part of the 5S rRNA/L5/L18/L25 subcomplex. Contacts the 5S rRNA. Binds to the 5S rRNA independently of L5 and L18.

Functionally, this is one of the proteins that binds to the 5S RNA in the ribosome where it forms part of the central protuberance. In Geobacter metallireducens (strain ATCC 53774 / DSM 7210 / GS-15), this protein is Large ribosomal subunit protein bL25.